The following is a 304-amino-acid chain: tRNA-5-methyluridine(54) 2-sulfurtransferase (304 aa).

Zn(2+)-binding residues include Cys-3, Cys-6, Cys-22, and His-25. ATP contacts are provided by Ala-53 and Ile-79. [4Fe-4S] cluster-binding residues include Cys-131 and Cys-134. Positions 138 and 157 each coordinate ATP. Cys-224 serves as a coordination point for [4Fe-4S] cluster. The Zn(2+) site is built by Cys-274, Cys-277, Cys-286, and Cys-289.

The protein belongs to the TtcA family. TtuA subfamily. Homodimer. Requires [4Fe-4S] cluster as cofactor. Mg(2+) is required as a cofactor.

The catalysed reaction is 5-methyluridine(54) in tRNA + hydrogen sulfide + ATP = 5-methyl-2-thiouridine(54) in tRNA + AMP + diphosphate. Its pathway is tRNA modification. Its function is as follows. Catalyzes the ATP-dependent 2-thiolation of 5-methyluridine residue at position 54 in the T loop of tRNAs, leading to 5-methyl-2-thiouridine (m(5)s(2)U or s(2)T). This modification allows thermal stabilization of tRNAs in thermophilic microorganisms, and is required for cell growth at high temperatures. Can use free sulfide as sulfur source in vitro. This is tRNA-5-methyluridine(54) 2-sulfurtransferase from Thermotoga maritima (strain ATCC 43589 / DSM 3109 / JCM 10099 / NBRC 100826 / MSB8).